A 255-amino-acid chain; its full sequence is Pyridoxine 5'-phosphate synthase (255 aa).

The 3-amino-2-oxopropyl phosphate site is built by asparagine 8 and arginine 19. Histidine 44 acts as the Proton acceptor in catalysis. Residues arginine 46 and histidine 51 each coordinate 1-deoxy-D-xylulose 5-phosphate. Glutamate 74 acts as the Proton acceptor in catalysis. Residue threonine 111 coordinates 1-deoxy-D-xylulose 5-phosphate. The Proton donor role is filled by histidine 202. Residues aspartate 203 and 225 to 226 (GH) each bind 3-amino-2-oxopropyl phosphate.

The protein belongs to the PNP synthase family. In terms of assembly, homooctamer; tetramer of dimers.

Its subcellular location is the cytoplasm. It catalyses the reaction 3-amino-2-oxopropyl phosphate + 1-deoxy-D-xylulose 5-phosphate = pyridoxine 5'-phosphate + phosphate + 2 H2O + H(+). It participates in cofactor biosynthesis; pyridoxine 5'-phosphate biosynthesis; pyridoxine 5'-phosphate from D-erythrose 4-phosphate: step 5/5. Catalyzes the complicated ring closure reaction between the two acyclic compounds 1-deoxy-D-xylulose-5-phosphate (DXP) and 3-amino-2-oxopropyl phosphate (1-amino-acetone-3-phosphate or AAP) to form pyridoxine 5'-phosphate (PNP) and inorganic phosphate. The chain is Pyridoxine 5'-phosphate synthase from Xanthomonas oryzae pv. oryzae (strain MAFF 311018).